The primary structure comprises 204 residues: Tat proofreading chaperone DmsD (204 aa).

This sequence belongs to the TorD/DmsD family. DmsD subfamily.

Its function is as follows. Required for biogenesis/assembly of DMSO reductase, but not for the interaction of the DmsA signal peptide with the Tat system. May be part of a chaperone cascade complex that facilitates a folding-maturation pathway for the substrate protein. The protein is Tat proofreading chaperone DmsD of Salmonella typhi.